The sequence spans 307 residues: Putative F-box/LRR-repeat protein 22 (307 aa).

Residues 1–15 are compositionally biased toward polar residues; sequence MVTSSSSPPLATSQL. A disordered region spans residues 1 to 26; it reads MVTSSSSPPLATSQLPVMKGEEKPSN. The F-box domain occupies 24–71; sequence PSNWAELPPDLLSSILLRLSPLEILENARKVCRSWRRVSKDPLIWRRI. LRR repeat units lie at residues 108 to 133, 158 to 183, 185 to 210, 212 to 237, and 244 to 270; these read WRFQTTSLLNYMAERSSNLRRLRVKG, YCSIEEEHFKTIGQACPNLKTLKLVG, WSHLNESDNDALAIADTMPGLLHLQL, SNGLTNIGLNAILDGCPHLECLDLRQ, and FGDLERQCLERIKDFRCPNDVLDDYNY. A compositionally biased stretch (acidic residues) spans 279–289; that stretch reads IEDEKGEEEEN. Positions 279-307 are disordered; that stretch reads IEDEKGEEEENYSYGSDDTEYGYRRSADF.

This is Putative F-box/LRR-repeat protein 22 (FBL22) from Arabidopsis thaliana (Mouse-ear cress).